Reading from the N-terminus, the 73-residue chain is Beta-defensin 40 (73 aa).

An N-terminal signal peptide occupies residues 1-23; sequence MKISCFLLMIFFLSCFQINPVAV. 3 disulfide bridges follow: Cys-29–Cys-58, Cys-36–Cys-51, and Cys-41–Cys-59.

This sequence belongs to the beta-defensin family. Only expressed in epididymis (corpus, cauda and caput).

The protein localises to the secreted. Has antibacterial activity. In Mus musculus (Mouse), this protein is Beta-defensin 40 (Defb40).